Consider the following 119-residue polypeptide: Immunoglobulin heavy variable 3-73 (119 aa).

Positions 1-19 are cleaved as a signal peptide; that stretch reads MEFGLSWVFLVAILKGVQC. The framework-1 stretch occupies residues 20-44; the sequence is EVQLVESGGGLVQPGGSLKLSCAAS. The 100-residue stretch at 20-119 folds into the Ig-like domain; sequence EVQLVESGGG…EDTAVYYCTR (100 aa). C41 and C117 are disulfide-bonded. Residues 45-52 form a complementarity-determining-1 region; it reads GFTFSGSA. Residues 53–69 are framework-2; it reads MHWVRQASGKGLEWVGR. Residues 70-79 form a complementarity-determining-2 region; sequence IRSKANSYAT. The segment at 80-117 is framework-3; that stretch reads AYAASVKGRFTISRDDSKNTAYLQMNSLKTEDTAVYYC. Positions 118–119 are complementarity-determining-3; sequence TR.

Immunoglobulins are composed of two identical heavy chains and two identical light chains; disulfide-linked.

It is found in the secreted. It localises to the cell membrane. In terms of biological role, v region of the variable domain of immunoglobulin heavy chains that participates in the antigen recognition. Immunoglobulins, also known as antibodies, are membrane-bound or secreted glycoproteins produced by B lymphocytes. In the recognition phase of humoral immunity, the membrane-bound immunoglobulins serve as receptors which, upon binding of a specific antigen, trigger the clonal expansion and differentiation of B lymphocytes into immunoglobulins-secreting plasma cells. Secreted immunoglobulins mediate the effector phase of humoral immunity, which results in the elimination of bound antigens. The antigen binding site is formed by the variable domain of one heavy chain, together with that of its associated light chain. Thus, each immunoglobulin has two antigen binding sites with remarkable affinity for a particular antigen. The variable domains are assembled by a process called V-(D)-J rearrangement and can then be subjected to somatic hypermutations which, after exposure to antigen and selection, allow affinity maturation for a particular antigen. The chain is Immunoglobulin heavy variable 3-73 from Homo sapiens (Human).